A 598-amino-acid chain; its full sequence is Chromodomain Y-like protein (598 aa).

The tract at residues 1-76 (MTFQASHRSA…VDKRKNKKGK (76 aa)) is disordered. Polar residues predominate over residues 44 to 56 (PSISVSSEQSGAQ). Residues 61-121 (LQVERIVDKR…RHTEKQKEST (61 aa)) enclose the Chromo domain. The segment at 61–309 (LQVERIVDKR…NIQTSVTGVT (249 aa)) is interaction with EZH2. The span at 65–76 (RIVDKRKNKKGK) shows a compositional bias: basic and acidic residues. Serine 88 is subject to Phosphoserine. Over residues 112–121 (RHTEKQKEST) the composition is skewed to basic and acidic residues. The disordered stretch occupies residues 112-149 (RHTEKQKESTLTRTNRTSPNNARKQISRSTNSNFSKTS). Positions 122-149 (LTRTNRTSPNNARKQISRSTNSNFSKTS) are enriched in polar residues. Lysine 135 is modified (N6,N6,N6-trimethyllysine; by EHMT2; alternate). The residue at position 135 (lysine 135) is an N6,N6-dimethyllysine; by EHMT2; alternate. Lysine 135 carries the N6-methyllysine; by EHMT2; alternate modification. Residues serine 170, serine 201, and serine 216 each carry the phosphoserine modification. A disordered region spans residues 204 to 226 (KSRTAVDGFQSESPEKLDPVEQG). The interval 362-594 (SENNSLNPEV…DSMLKYLQRK (233 aa)) is acetyl-CoA-binding domain.

Forms multimers and multimerization is required for stable binding to chromatin. Interacts with HDAC1 and HDAC2 via its C-terminal acetyl-CoA-binding domain. Interacts with EZH2, EED, SUZ12, REST, EHMT1 and EHMT2. Part of a complex containing at least CDYL, REST, WIZ, SETB1, EHMT1 and EHMT2. Part of a complex containing at least CDYL, MIER1, MIER2, HDAC1 and HDAC2. Interacts with CHAF1A and CHAF1B; bridging the CAF-1 complex to the MCM2-7 (MCM) complex. Interacts with MCM3 and MCM5; bridging the CAF-1 complex to the MCM2-7 (MCM) complex. Recruited to Xist RNA-coated X chromosome. Interacts with EHMT2 and PRDM9; interaction only takes place when PRDM9 is bound to hotspot DNA. As to expression, expressed in the hippocampus with reduced expression in epileptic tissue compared to normal adjacent tissue (at protein level). Ubiquitous. Expressed at moderate levels in all tissues examined. Isoform 2: Most abundantly expressed isoform.

The protein localises to the nucleus. It is found in the chromosome. It catalyses the reaction 3-hydroxybutanoyl-CoA = (2E)-butenoyl-CoA + H2O. Chromatin reader protein that recognizes and binds histone H3 trimethylated at 'Lys-9', dimethylated at 'Lys-27' and trimethylated at 'Lys-27' (H3K9me3, H3K27me2 and H3K27me3, respectively). Part of multimeric repressive chromatin complexes, where it is required for transmission and restoration of repressive histone marks, thereby preserving the epigenetic landscape. Required for chromatin targeting and maximal enzymatic activity of Polycomb repressive complex 2 (PRC2); acts as a positive regulator of PRC2 activity by bridging the pre-existing histone H3K27me3 and newly recruited PRC2 on neighboring nucleosomes. Acts as a corepressor for REST by facilitating histone-lysine N-methyltransferase EHMT2 recruitment and H3K9 dimethylation at REST target genes for repression. Involved in X chromosome inactivation in females: recruited to Xist RNA-coated X chromosome and facilitates propagation of H3K9me2 by anchoring EHMT2. Promotes EZH2 accumulation and H3K27me3 methylation at DNA double strand breaks (DSBs), thereby facilitating transcriptional repression at sites of DNA damage and homology-directed repair of DSBs. Required for neuronal migration during brain development by repressing expression of RHOA. By repressing the expression of SCN8A, contributes to the inhibition of intrinsic neuronal excitability and epileptogenesis. In addition to acting as a chromatin reader, acts as a hydro-lyase. Shows crotonyl-coA hydratase activity by mediating the conversion of crotonyl-CoA ((2E)-butenoyl-CoA) to beta-hydroxybutyryl-CoA (3-hydroxybutanoyl-CoA), thereby acting as a negative regulator of histone crotonylation. Histone crotonylation is required during spermatogenesis; down-regulation of histone crotonylation by CDYL regulates the reactivation of sex chromosome-linked genes in round spermatids and histone replacement in elongating spermatids. By regulating histone crotonylation and trimethylation of H3K27, may be involved in stress-induced depression-like behaviors, possibly by regulating VGF expression. Functionally, not able to recognize and bind histone H3K9me3, histone H3K27me2 and histone H3K27me3, due to the presence of a N-terminal extension that inactivates the chromo domain. In terms of biological role, not able to recognize and bind histone H3K9me3, histone H3K27me2 and histone H3K27me3, due to the absence of the chromo domain. Acts as a negative regulator of isoform 2 by displacing isoform 2 from chromatin. This chain is Chromodomain Y-like protein, found in Homo sapiens (Human).